Here is a 151-residue protein sequence, read N- to C-terminus: U1 small nuclear ribonucleoprotein C (151 aa).

The segment at Y4–F36 adopts a Matrin-type zinc-finger fold.

Belongs to the U1 small nuclear ribonucleoprotein C family. In terms of assembly, U1 snRNP is composed of the 7 core Sm proteins B/B', D1, D2, D3, E, F and G that assemble in a heptameric protein ring on the Sm site of the small nuclear RNA to form the core snRNP, and at least 3 U1 snRNP-specific proteins U1-70K, U1-A and U1-C. U1-C interacts with U1 snRNA and the 5' splice-site region of the pre-mRNA.

It localises to the nucleus. Its function is as follows. Component of the spliceosomal U1 snRNP, which is essential for recognition of the pre-mRNA 5' splice-site and the subsequent assembly of the spliceosome. U1-C is directly involved in initial 5' splice-site recognition for both constitutive and regulated alternative splicing. The interaction with the 5' splice-site seems to precede base-pairing between the pre-mRNA and the U1 snRNA. Stimulates commitment or early (E) complex formation by stabilizing the base pairing of the 5' end of the U1 snRNA and the 5' splice-site region. The sequence is that of U1 small nuclear ribonucleoprotein C from Anopheles darlingi (Mosquito).